The chain runs to 668 residues: Protein-glutamine gamma-glutamyltransferase (668 aa).

The Cytoplasmic segment spans residues 1–6; it reads MNAIPR. The helical transmembrane segment at 7–27 threads the bilayer; that stretch reads VALVWLLVAQVLVILPHLAYM. Residues 28 to 50 are Periplasmic-facing; the sequence is PLWIAAMWLGCAAWRVQVFRMRA. The chain crosses the membrane as a helical span at residues 51-71; it reads GYPRAWVKLALALLAGAGVWL. Residues 72–74 are Cytoplasmic-facing; it reads SRG. The helical transmembrane segment at 75–95 threads the bilayer; it reads SLVGLDAGAVLLIAAFILKLV. Residues 96–103 are Periplasmic-facing; the sequence is EMKTRRDA. The next 2 membrane-spanning stretches (helical) occupy residues 104–124 and 125–145; these read LVLV…DDGF and LAAL…IGLQ. At 146–158 the chain is on the cytoplasmic side; that stretch reads QSAFASRPWPTLR. The helical transmembrane segment at 159-179 threads the bilayer; sequence LAGGLLLQALPLMLLLFLFFP. The Periplasmic segment spans residues 180-548; it reads RLGPLWSLPM…FGGLDPTRLG (369 aa). Catalysis depends on C404, which acts as the Nucleophile. Residues H448 and D464 contribute to the active site. Residues 549 to 569 traverse the membrane as a helical segment; the sequence is LLLGAAAILSVGLLALFLLKP. At 570–668 the chain is on the cytoplasmic side; the sequence is WQGRGDLRSR…TRDGRGEEQA (99 aa).

The protein belongs to the transglutaminase-like superfamily.

The protein resides in the cell inner membrane. It carries out the reaction L-glutaminyl-[protein] + L-lysyl-[protein] = [protein]-L-lysyl-N(6)-5-L-glutamyl-[protein] + NH4(+). Functionally, displays transglutaminase activity (TGase) in vitro. Plays a critical role in the viability of P.aeruginosa. Might contribute to an essential function linked to the cell wall. The chain is Protein-glutamine gamma-glutamyltransferase (tgpA) from Pseudomonas aeruginosa (strain ATCC 15692 / DSM 22644 / CIP 104116 / JCM 14847 / LMG 12228 / 1C / PRS 101 / PAO1).